We begin with the raw amino-acid sequence, 185 residues long: Elongation factor P (185 aa).

Belongs to the elongation factor P family.

It is found in the cytoplasm. Its pathway is protein biosynthesis; polypeptide chain elongation. Its function is as follows. Involved in peptide bond synthesis. Stimulates efficient translation and peptide-bond synthesis on native or reconstituted 70S ribosomes in vitro. Probably functions indirectly by altering the affinity of the ribosome for aminoacyl-tRNA, thus increasing their reactivity as acceptors for peptidyl transferase. This chain is Elongation factor P, found in Burkholderia cenocepacia (strain HI2424).